The following is a 136-amino-acid chain: Histone H3 (136 aa).

The disordered stretch occupies residues 1-43; sequence MARTKQTARKSTGGKAPRKQLASKAARKSAPSTGGVKKPHRYK. Lys5 is subject to N6,N6,N6-trimethyllysine; alternate. Residue Lys5 is modified to N6,N6-dimethyllysine; alternate. 2 positions are modified to N6-methyllysine; alternate: Lys5 and Lys10. Lys10 carries the post-translational modification N6-acetyllysine; alternate. Ser11 is modified (phosphoserine). Position 15 is an N6,N6-dimethyllysine; alternate (Lys15). Lys15, Lys19, Lys24, Lys28, and Lys37 each carry N6-acetyllysine; alternate. N6-methyllysine; alternate occurs at positions 19, 24, 28, and 37. An N6,N6,N6-trimethyllysine; alternate mark is found at Lys28 and Lys37. 2 positions are modified to N6,N6-dimethyllysine; alternate: Lys28 and Lys37. N6-acetyllysine occurs at positions 57 and 65. Lys80 bears the N6,N6,N6-trimethyllysine; alternate mark. Residue Lys80 is modified to N6,N6-dimethyllysine; alternate. At Lys80 the chain carries N6-methyllysine; alternate.

This sequence belongs to the histone H3 family. In terms of assembly, the nucleosome is a histone octamer containing two molecules each of H2A, H2B, H3 and H4 assembled in one H3-H4 heterotetramer and two H2A-H2B heterodimers. The octamer wraps approximately 147 bp of DNA. Phosphorylated to form H3S10ph. H3S10ph promotes subsequent H3K14ac formation and is required for transcriptional activation through TBP recruitment to the promoters. In terms of processing, mono-, di- and trimethylated by the COMPASS complex to form H3K4me1/2/3. H3K4me activates gene expression by regulating transcription elongation and plays a role in telomere length maintenance. H3K4me enrichment correlates with transcription levels, and occurs in a 5' to 3' gradient with H3K4me3 enrichment at the 5'-end of genes, shifting to H3K4me2 and then H3K4me1. Methylated by SET2 to form H3K36me. H3K36me represses gene expression. Methylated by DOT1 to form H3K79me. H3K79me is required for association of SIR proteins with telomeric regions and for telomeric silencing. The COMPASS-mediated formation of H3K4me2/3 and the DOT1-mediated formation of H3K79me require H2BK123ub1. Post-translationally, acetylation of histone H3 leads to transcriptional activation. H3K14ac formation by GCN5 is promoted by H3S10ph. H3K14ac can also be formed by ESA1. H3K56ac formation occurs predominantly in newly synthesized H3 molecules during G1, S and G2/M of the cell cycle and may be involved in DNA repair.

Its subcellular location is the nucleus. It is found in the chromosome. Core component of nucleosome. Nucleosomes wrap and compact DNA into chromatin, limiting DNA accessibility to the cellular machineries which require DNA as a template. Histones thereby play a central role in transcription regulation, DNA repair, DNA replication and chromosomal stability. DNA accessibility is regulated via a complex set of post-translational modifications of histones, also called histone code, and nucleosome remodeling. This chain is Histone H3 (HHT1), found in Phaeosphaeria nodorum (strain SN15 / ATCC MYA-4574 / FGSC 10173) (Glume blotch fungus).